The chain runs to 615 residues: Delta(14)-sterol reductase LBR (615 aa).

The region spanning 1–62 (MPSRKFADGE…DIKPLTSFRQ (62 aa)) is the Tudor domain. Residues 1-211 (MPSRKFADGE…IRAKDLEFGG (211 aa)) are Nuclear-facing. The tract at residues 53–109 (DIKPLTSFRQRKGGSTSSSPSRRRGSRSRSRSRSPGRPPKSARRSASASHQADIKEA) is disordered. An N6-acetyllysine modification is found at Lys-55. At Thr-58 the chain carries Phosphothreonine. A phosphoserine mark is found at Ser-59 and Ser-67. Ser-71 and Ser-86 each carry phosphoserine; by CDK1. Basic residues predominate over residues 73-86 (SRRRGSRSRSRSRS). Phosphoserine is present on residues Ser-97 and Ser-99. Thr-118 is subject to Phosphothreonine. Ser-128 bears the Phosphoserine mark. Thr-200 is modified (phosphothreonine). 8 consecutive transmembrane segments (helical) span residues 212–232 (VPGVFLIMFGLPVFLFLLLLM), 258–278 (VFGVYLLWFLIQVVFYLLPIG), 299–319 (FYAFILTSAVIGTSLFQGVEF), 326–346 (FLQFALAATVFCVVLSVYLYM), 415–435 (VPSLAMILVNSFQLLYVVDAL), 447–467 (IIHDGFGFMLAFGDLVWVPFI), 481–501 (EVSWPMASLIIVLKFCGYVIF), and 561–581 (ACGFNHILPYFYIIYFTMLLV). An N6-acetyllysine mark is found at Lys-594 and Lys-601.

It belongs to the ERG4/ERG24 family. Interacts with CBX5. Interacts with DNA. Interaction with DNA is sequence independent with higher affinity for supercoiled and relaxed circular DNA than linear DNA. Interacts with lamin B. Interacts with CLNK. Interacts with TMEM147; promoting LBR localization to the nucleus inner membrane. In terms of processing, phosphorylated by CDK1 in mitosis when the inner nuclear membrane breaks down into vesicles that dissociate from the lamina and the chromatin. It is phosphorylated by different protein kinases in interphase when the membrane is associated with these structures. Phosphorylation of LBR and HP1 proteins may be responsible for some of the alterations in chromatin organization and nuclear structure which occur at various times during the cell cycle. Phosphorylated by SRPK1. In late anaphase LBR is dephosphorylated, probably by PP1 and/or PP2A, allowing reassociation with chromatin.

It localises to the nucleus inner membrane. It is found in the nucleus. The protein resides in the cytoplasm. Its subcellular location is the endoplasmic reticulum membrane. The enzyme catalyses 5alpha-cholest-8,14-dien-3beta-ol + NADPH + H(+) = 5alpha-cholest-8-en-3beta-ol + NADP(+). It carries out the reaction 4,4-dimethyl-5alpha-cholesta-8,24-dien-3beta-ol + NADP(+) = 4,4-dimethyl-5alpha-cholesta-8,14,24-trien-3beta-ol + NADPH + H(+). The catalysed reaction is 4,4-dimethyl-8,14-cholestadien-3beta-ol + NADPH + H(+) = 4,4-dimethyl-5alpha-cholest-8-en-3beta-ol + NADP(+). It functions in the pathway steroid biosynthesis; cholesterol biosynthesis. Its function is as follows. Catalyzes the reduction of the C14-unsaturated bond of lanosterol, as part of the metabolic pathway leading to cholesterol biosynthesis. Plays a critical role in myeloid cell cholesterol biosynthesis which is essential to both myeloid cell growth and functional maturation. Mediates the activation of NADPH oxidases, perhaps by maintaining critical levels of cholesterol required for membrane lipid raft formation during neutrophil differentiation. Anchors the lamina and the heterochromatin to the inner nuclear membrane. In Pongo abelii (Sumatran orangutan), this protein is Delta(14)-sterol reductase LBR (LBR).